The following is a 92-amino-acid chain: Small ribosomal subunit protein uS19c (92 aa).

Belongs to the universal ribosomal protein uS19 family.

The protein resides in the plastid. The protein localises to the chloroplast. Functionally, protein S19 forms a complex with S13 that binds strongly to the 16S ribosomal RNA. The sequence is that of Small ribosomal subunit protein uS19c from Ceratophyllum demersum (Rigid hornwort).